Reading from the N-terminus, the 199-residue chain is FMN-dependent NADH:quinone oxidoreductase (199 aa).

FMN-binding positions include 17–19 and 87–90; these read SNS and MYNF.

This sequence belongs to the azoreductase type 1 family. As to quaternary structure, homodimer. The cofactor is FMN.

It catalyses the reaction 2 a quinone + NADH + H(+) = 2 a 1,4-benzosemiquinone + NAD(+). It carries out the reaction N,N-dimethyl-1,4-phenylenediamine + anthranilate + 2 NAD(+) = 2-(4-dimethylaminophenyl)diazenylbenzoate + 2 NADH + 2 H(+). Quinone reductase that provides resistance to thiol-specific stress caused by electrophilic quinones. Its function is as follows. Also exhibits azoreductase activity. Catalyzes the reductive cleavage of the azo bond in aromatic azo compounds to the corresponding amines. The polypeptide is FMN-dependent NADH:quinone oxidoreductase (Mycoplasma mycoides subsp. mycoides SC (strain CCUG 32753 / NCTC 10114 / PG1)).